The sequence spans 566 residues: Proline--tRNA ligase (566 aa).

The protein belongs to the class-II aminoacyl-tRNA synthetase family. ProS type 1 subfamily. In terms of assembly, homodimer.

It localises to the cytoplasm. It carries out the reaction tRNA(Pro) + L-proline + ATP = L-prolyl-tRNA(Pro) + AMP + diphosphate. Functionally, catalyzes the attachment of proline to tRNA(Pro) in a two-step reaction: proline is first activated by ATP to form Pro-AMP and then transferred to the acceptor end of tRNA(Pro). As ProRS can inadvertently accommodate and process non-cognate amino acids such as alanine and cysteine, to avoid such errors it has two additional distinct editing activities against alanine. One activity is designated as 'pretransfer' editing and involves the tRNA(Pro)-independent hydrolysis of activated Ala-AMP. The other activity is designated 'posttransfer' editing and involves deacylation of mischarged Ala-tRNA(Pro). The misacylated Cys-tRNA(Pro) is not edited by ProRS. The polypeptide is Proline--tRNA ligase (Exiguobacterium sibiricum (strain DSM 17290 / CCUG 55495 / CIP 109462 / JCM 13490 / 255-15)).